The primary structure comprises 554 residues: Sesquiterpene synthase 14b (554 aa).

Mg(2+) contacts are provided by aspartate 305, aspartate 309, aspartate 449, and glutamate 457. Positions 305 to 309 (DDLYD) match the DDXXD motif motif.

This sequence belongs to the terpene synthase family. Tpsa subfamily. Requires Mg(2+) as cofactor. The cofactor is Mn(2+).

It catalyses the reaction (2E,6E)-farnesyl diphosphate = (E)-gamma-bisabolene + diphosphate. It carries out the reaction (2Z,6Z)-farnesyl diphosphate = (E)-gamma-bisabolene + diphosphate. The enzyme catalyses (2Z,6Z)-farnesyl diphosphate = (E)-alpha-bisabolene + diphosphate. The catalysed reaction is (2Z,6Z)-farnesyl diphosphate = (Z)-beta-farnesene + diphosphate. It catalyses the reaction (2E,6E)-farnesyl diphosphate = (E)-beta-farnesene + diphosphate. It carries out the reaction (2E,6E)-farnesyl diphosphate = (+)-thujopsene + diphosphate. The enzyme catalyses (2Z,6Z)-farnesyl diphosphate = (E)-beta-farnesene + diphosphate. The catalysed reaction is (2E,6E)-farnesyl diphosphate = (Z)-beta-farnesene + diphosphate. It catalyses the reaction (2Z,6Z)-farnesyl diphosphate = beta-acoradiene + diphosphate. It carries out the reaction (2Z,6Z)-farnesyl diphosphate = alpha-acoradiene + diphosphate. The enzyme catalyses (2Z,6Z)-farnesyl diphosphate = beta-bisabolene + diphosphate. The catalysed reaction is (2E,6E)-farnesyl diphosphate = (-)-alpha-cedrene + diphosphate. It catalyses the reaction (2E,6E)-farnesyl diphosphate = beta-bisabolene + diphosphate. It carries out the reaction (2E,6E)-farnesyl diphosphate = beta-acoradiene + diphosphate. The enzyme catalyses (2Z,6Z)-farnesyl diphosphate = (-)-alpha-cedrene + diphosphate. The catalysed reaction is (2E)-geranyl diphosphate = terpinolene + diphosphate. It catalyses the reaction (2E)-geranyl diphosphate = limonene + diphosphate. It carries out the reaction (2E)-geranyl diphosphate = beta-myrcene + diphosphate. It participates in secondary metabolite biosynthesis; terpenoid biosynthesis. Its function is as follows. Sesquiterpene synthase involved in the biosynthesis of volatile compounds. Mediates the conversion of (2E,6E)-farnesyl diphosphate ((EE)-FPP) into (+)-thujopsene, beta-bisabolene, alpha-cederene, beta-acoradiene, (E)-gamma-bisabolene, (Z)-alpha-bisabolene, (Z)-beta-farnesene and (E)-beta-farnesene, and of (2Z,6Z)-farnesyl diphosphate ((ZZ)-FPP) into (E)-gamma-bisabolene, (E)-alpha-bisabolene, (E)-beta-farnesene, (Z)-beta-farnesene, beta-bisabolene, beta-acoradiene and alpha-acoradiene. Can act with a low efficiency as a monoterpene synthase with geranyl diphosphate (GPP) as substrate, thus producing beta-myrcene, limonene and terpinolene. The protein is Sesquiterpene synthase 14b of Solanum habrochaites (Wild tomato).